The chain runs to 206 residues: Ribosomal RNA small subunit methyltransferase G (206 aa).

S-adenosyl-L-methionine contacts are provided by residues Gly73, Leu78, 124 to 125 (VE), and Arg139.

It belongs to the methyltransferase superfamily. RNA methyltransferase RsmG family.

The protein localises to the cytoplasm. It catalyses the reaction guanosine(527) in 16S rRNA + S-adenosyl-L-methionine = N(7)-methylguanosine(527) in 16S rRNA + S-adenosyl-L-homocysteine. Its function is as follows. Specifically methylates the N7 position of guanine in position 527 of 16S rRNA. This is Ribosomal RNA small subunit methyltransferase G from Yersinia enterocolitica serotype O:8 / biotype 1B (strain NCTC 13174 / 8081).